The following is a 291-amino-acid chain: Trimeric intracellular cation channel type B (291 aa).

Topologically, residues 1 to 19 are lumenal; sequence MDSPWDELALAFSRTSMFP. Residues 20-33 traverse the membrane as a helical segment; that stretch reads FFDIAHYLVSVMAV. Residues 34-50 are Cytoplasmic-facing; sequence KRQPGAAALAWKNPISS. The chain crosses the membrane as a helical span at residues 51-70; sequence WFTAMLHCFGGGILSCLLLA. Residues 71 to 82 lie on the Lumenal side of the membrane; sequence EPPLKFLANHTN. The chain crosses the membrane as a helical span at residues 83-99; the sequence is ILLASSIWYITFFCPHD. The Cytoplasmic portion of the chain corresponds to 100–104; it reads LVSQG. A helical membrane pass occupies residues 105-121; sequence YSYLPVQLLASGMKEVT. Positions 118 and 122 each coordinate a 1,2-diacyl-sn-glycero-3-phospho-(1D-myo-inositol-4,5-bisphosphate). At 122 to 139 the chain is on the lumenal side; it reads RTWKIVGGVTHANSYYKN. The chain crosses the membrane as a helical span at residues 140 to 156; it reads GWIVMIAIGWARGAGGT. At 157–179 the chain is on the cytoplasmic side; the sequence is IITNFERLVKGDWKPEGDEWLKM. Residues 180-195 form a helical membrane-spanning segment; the sequence is SYPAKVTLLGSVIFTF. The Lumenal portion of the chain corresponds to 196–207; that stretch reads QHTQHLAISKHN. Residues 208–227 form a helical membrane-spanning segment; the sequence is LMFLYTIFIVATKITMMTTQ. Residues 228–291 are Cytoplasmic-facing; sequence TSTMTFAPFE…VKKKHTKKNE (64 aa). Residues 256–291 form a disordered region; that stretch reads KKSEAKSPSNGVGSLASKPVDVASDNVKKKHTKKNE. Phosphoserine is present on S262.

It belongs to the TMEM38 family. In terms of assembly, homotrimer; conformation seems to be controled by binding to diacylglycerol (DAG).

The protein resides in the endoplasmic reticulum membrane. The enzyme catalyses K(+)(in) = K(+)(out). With respect to regulation, channel activity is activated by increased cytosolic Ca(2+) levels and blocked by luminal high Ca(2+) levels. Functionally, intracellular monovalent cation channel required for maintenance of rapid intracellular calcium release. Acts as a potassium counter-ion channel that functions in synchronization with calcium release from intracellular stores. Activated by increased cytosolic Ca(2+) levels. The sequence is that of Trimeric intracellular cation channel type B from Homo sapiens (Human).